The chain runs to 165 residues: SsrA-binding protein (165 aa).

It belongs to the SmpB family.

The protein resides in the cytoplasm. In terms of biological role, required for rescue of stalled ribosomes mediated by trans-translation. Binds to transfer-messenger RNA (tmRNA), required for stable association of tmRNA with ribosomes. tmRNA and SmpB together mimic tRNA shape, replacing the anticodon stem-loop with SmpB. tmRNA is encoded by the ssrA gene; the 2 termini fold to resemble tRNA(Ala) and it encodes a 'tag peptide', a short internal open reading frame. During trans-translation Ala-aminoacylated tmRNA acts like a tRNA, entering the A-site of stalled ribosomes, displacing the stalled mRNA. The ribosome then switches to translate the ORF on the tmRNA; the nascent peptide is terminated with the 'tag peptide' encoded by the tmRNA and targeted for degradation. The ribosome is freed to recommence translation, which seems to be the essential function of trans-translation. The sequence is that of SsrA-binding protein from Parvibaculum lavamentivorans (strain DS-1 / DSM 13023 / NCIMB 13966).